The following is a 156-amino-acid chain: Ribosomal RNA large subunit methyltransferase H (156 aa).

Residues L73, G104, and L123–M128 contribute to the S-adenosyl-L-methionine site.

Belongs to the RNA methyltransferase RlmH family. In terms of assembly, homodimer.

It is found in the cytoplasm. The catalysed reaction is pseudouridine(1915) in 23S rRNA + S-adenosyl-L-methionine = N(3)-methylpseudouridine(1915) in 23S rRNA + S-adenosyl-L-homocysteine + H(+). In terms of biological role, specifically methylates the pseudouridine at position 1915 (m3Psi1915) in 23S rRNA. The sequence is that of Ribosomal RNA large subunit methyltransferase H from Tolumonas auensis (strain DSM 9187 / NBRC 110442 / TA 4).